The sequence spans 98 residues: Putative pterin-4-alpha-carbinolamine dehydratase (98 aa).

This sequence belongs to the pterin-4-alpha-carbinolamine dehydratase family.

It carries out the reaction (4aS,6R)-4a-hydroxy-L-erythro-5,6,7,8-tetrahydrobiopterin = (6R)-L-erythro-6,7-dihydrobiopterin + H2O. This Parasynechococcus marenigrum (strain WH8102) protein is Putative pterin-4-alpha-carbinolamine dehydratase.